A 172-amino-acid polypeptide reads, in one-letter code: RNA pyrophosphohydrolase (172 aa).

The region spanning 6-149 is the Nudix hydrolase domain; sequence GYRLNVGIVI…KRDVYRRAMK (144 aa). Residues 38–59 carry the Nudix box motif; sequence GGIDEGETPEQAMYRELYEEVG.

Belongs to the Nudix hydrolase family. RppH subfamily. A divalent metal cation is required as a cofactor.

Functionally, accelerates the degradation of transcripts by removing pyrophosphate from the 5'-end of triphosphorylated RNA, leading to a more labile monophosphorylated state that can stimulate subsequent ribonuclease cleavage. This Vibrio atlanticus (strain LGP32) (Vibrio splendidus (strain Mel32)) protein is RNA pyrophosphohydrolase.